We begin with the raw amino-acid sequence, 193 residues long: 3-isopropylmalate dehydratase small subunit (193 aa).

This sequence belongs to the LeuD family. LeuD type 1 subfamily. Heterodimer of LeuC and LeuD.

The enzyme catalyses (2R,3S)-3-isopropylmalate = (2S)-2-isopropylmalate. It participates in amino-acid biosynthesis; L-leucine biosynthesis; L-leucine from 3-methyl-2-oxobutanoate: step 2/4. Catalyzes the isomerization between 2-isopropylmalate and 3-isopropylmalate, via the formation of 2-isopropylmaleate. The protein is 3-isopropylmalate dehydratase small subunit of Bacillus thuringiensis subsp. konkukian (strain 97-27).